The sequence spans 100 residues: Vesicle-associated membrane protein 3 (100 aa).

The residue at position 2 (Ser-2) is an N-acetylserine. The Cytoplasmic segment spans residues 2-77 (STGPTAATGS…KRKYWWKNCK (76 aa)). Positions 14-74 (RLQQTQNQVD…AKLKRKYWWK (61 aa)) constitute a v-SNARE coiled-coil homology domain. Residues Lys-66, Lys-68, and Lys-77 each participate in a glycyl lysine isopeptide (Lys-Gly) (interchain with G-Cter in ubiquitin) cross-link. Residues 78–98 (MWAIGITVLVIFIIIIIVWVV) form a helical; Anchor for type IV membrane protein membrane-spanning segment. Residues 99-100 (SS) are Vesicular-facing.

This sequence belongs to the synaptobrevin family. As to quaternary structure, interacts with POPDC1 (via the C-terminus cytoplasmic tail). Interacts with BCAP31; involved in VAMP3 export from the endoplasmic reticulum. Interacts with BAIAP3; this interaction is increased in the presence of calcium. Interacts with PICALM. Ubiquitinated by RNF167 at Lys-66, Lys-68 and Lys-77, regulating the recycling endosome pathway. In terms of processing, (Microbial infection) Targeted and hydrolyzed by C.botulinum neurotoxin type B (BoNT/B, botB) which hydrolyzes the 59-Gln-|-Phe-60 bond and probably inhibits neurotransmitter release. Post-translationally, (Microbial infection) Targeted and hydrolyzed by C.botulinum neurotoxin type D (BoNT/D, botD) which hydrolyzes the 42-Lys-|-Leu-43 bond and probably inhibits neurotransmitter release. Note that humans are not known to be infected by C.botulinum type D. (Microbial infection) Targeted and hydrolyzed by C.botulinum neurotoxin type F (BoNT/F, botF) which hydrolyzes the 41-Gln-|-Lys-42 bond and probably inhibits neurotransmitter release.

It is found in the early endosome membrane. It localises to the recycling endosome membrane. Its subcellular location is the synapse. The protein localises to the synaptosome. Its function is as follows. SNARE involved in vesicular transport from the late endosomes to the trans-Golgi network. This chain is Vesicle-associated membrane protein 3 (VAMP3), found in Homo sapiens (Human).